Here is a 708-residue protein sequence, read N- to C-terminus: ABC transporter G family member 18 (708 aa).

In terms of domain architecture, ABC transporter spans 75 to 317; that stretch reads RRRFDFSRRK…FSSFGRPIPE (243 aa). Position 109-116 (109-116) interacts with ATP; that stretch reads GGSGAGKS. Positions 402–612 constitute an ABC transmembrane type-2 domain; it reads AETFILAKRY…PYEAVLINEF (211 aa). 7 helical membrane-spanning segments follow: residues 421–441, 456–476, 508–528, 537–557, 560–580, 589–609, and 681–701; these read LIGM…TVYW, FFAF…PVFI, LLAL…LSGG, LIIY…SGLI, VMMS…LGGF, LYWI…AVLI, and LWIT…SLLF.

It belongs to the ABC transporter superfamily. ABCG family. Eye pigment precursor importer (TC 3.A.1.204) subfamily.

It localises to the membrane. This is ABC transporter G family member 18 (ABCG18) from Arabidopsis thaliana (Mouse-ear cress).